A 189-amino-acid chain; its full sequence is Elongation factor P (189 aa).

This sequence belongs to the elongation factor P family.

It localises to the cytoplasm. It functions in the pathway protein biosynthesis; polypeptide chain elongation. Functionally, involved in peptide bond synthesis. Stimulates efficient translation and peptide-bond synthesis on native or reconstituted 70S ribosomes in vitro. Probably functions indirectly by altering the affinity of the ribosome for aminoacyl-tRNA, thus increasing their reactivity as acceptors for peptidyl transferase. The polypeptide is Elongation factor P (Pseudomonas syringae pv. tomato (strain ATCC BAA-871 / DC3000)).